The following is a 28-amino-acid chain: Potassium channel toxin alpha-KTx 9.7 (28 aa).

Intrachain disulfides connect C3–C19, C6–C24, and C10–C26.

Expressed by the venom gland.

It is found in the secreted. Functionally, calcium channel activator. Rapidly and reversibly activates ryanodine receptor 1 (RYR1). This Hottentotta judaicus (Black scorpion) protein is Potassium channel toxin alpha-KTx 9.7.